Here is a 372-residue protein sequence, read N- to C-terminus: Aminomethyltransferase (372 aa).

The protein belongs to the GcvT family. In terms of assembly, the glycine cleavage system is composed of four proteins: P, T, L and H.

The enzyme catalyses N(6)-[(R)-S(8)-aminomethyldihydrolipoyl]-L-lysyl-[protein] + (6S)-5,6,7,8-tetrahydrofolate = N(6)-[(R)-dihydrolipoyl]-L-lysyl-[protein] + (6R)-5,10-methylene-5,6,7,8-tetrahydrofolate + NH4(+). Its function is as follows. The glycine cleavage system catalyzes the degradation of glycine. The protein is Aminomethyltransferase of Burkholderia multivorans (strain ATCC 17616 / 249).